A 315-amino-acid chain; its full sequence is Aspartate carbamoyltransferase catalytic subunit (315 aa).

Arg65 and Thr66 together coordinate carbamoyl phosphate. Lys93 contacts L-aspartate. Residues Arg115, His145, and Gln148 each contribute to the carbamoyl phosphate site. L-aspartate is bound by residues Arg179 and Arg234. Carbamoyl phosphate-binding residues include Gly275 and Pro276.

This sequence belongs to the aspartate/ornithine carbamoyltransferase superfamily. ATCase family. As to quaternary structure, heterododecamer (2C3:3R2) of six catalytic PyrB chains organized as two trimers (C3), and six regulatory PyrI chains organized as three dimers (R2).

The enzyme catalyses carbamoyl phosphate + L-aspartate = N-carbamoyl-L-aspartate + phosphate + H(+). It functions in the pathway pyrimidine metabolism; UMP biosynthesis via de novo pathway; (S)-dihydroorotate from bicarbonate: step 2/3. Functionally, catalyzes the condensation of carbamoyl phosphate and aspartate to form carbamoyl aspartate and inorganic phosphate, the committed step in the de novo pyrimidine nucleotide biosynthesis pathway. The protein is Aspartate carbamoyltransferase catalytic subunit of Xanthomonas oryzae pv. oryzae (strain MAFF 311018).